The following is a 358-amino-acid chain: Zinc-type alcohol dehydrogenase-like protein YogA (358 aa).

Belongs to the zinc-containing alcohol dehydrogenase family. Quinone oxidoreductase subfamily.

The protein operates within secondary metabolite biosynthesis. In terms of biological role, zinc-type alcohol dehydrogenase-like protein; part of the gene cluster that mediates the biosynthesis of phomenoic acid, a long chain aliphatic carboxylic acid that does not appear to be essential for pathogenicity but may play a role in allowing to outcompete other fungi in the environmental niche via its antifungal properties. The polyketide synthase produces the long methylated aliphatic carboxylic acid chain of phomenoic acid. The cluster-specific cytochrome P450 monooxygenase may then hydroxylate the methyl group of carbon 31. The putative dehydrogenase YogA, which has no obvious role in phomenoic acid biosynthesis, may further modify phomenoic acid to produce a compound not identified yet. The sequence is that of Zinc-type alcohol dehydrogenase-like protein YogA from Leptosphaeria maculans (strain JN3 / isolate v23.1.3 / race Av1-4-5-6-7-8) (Blackleg fungus).